Consider the following 484-residue polypeptide: RxLR effector protein PexRD18 (484 aa).

The signal sequence occupies residues 1–20 (MSHQRILLLLMAAFFAWVSA). Positions 55–79 (RFLRLYDAEVRDTVRGDNDVDREER) match the RxLR-dEER motif.

The protein belongs to the RxLR effector family.

Its subcellular location is the secreted. The protein localises to the host cell membrane. Its function is as follows. Effector that enhances P.infestans colonization of Nicotiana benthamiana leaves. This is RxLR effector protein PexRD18 from Phytophthora infestans (strain T30-4) (Potato late blight agent).